The sequence spans 353 residues: RNA 3'-terminal phosphate cyclase (353 aa).

ATP is bound by residues glutamine 100 and 289–292 (HMSD). The active-site Tele-AMP-histidine intermediate is the histidine 315.

This sequence belongs to the RNA 3'-terminal cyclase family. Type 1 subfamily.

It localises to the cytoplasm. It catalyses the reaction a 3'-end 3'-phospho-ribonucleotide-RNA + ATP = a 3'-end 2',3'-cyclophospho-ribonucleotide-RNA + AMP + diphosphate. Catalyzes the conversion of 3'-phosphate to a 2',3'-cyclic phosphodiester at the end of RNA. The mechanism of action of the enzyme occurs in 3 steps: (A) adenylation of the enzyme by ATP; (B) transfer of adenylate to an RNA-N3'P to produce RNA-N3'PP5'A; (C) and attack of the adjacent 2'-hydroxyl on the 3'-phosphorus in the diester linkage to produce the cyclic end product. The biological role of this enzyme is unknown but it is likely to function in some aspects of cellular RNA processing. The polypeptide is RNA 3'-terminal phosphate cyclase (Ignicoccus hospitalis (strain KIN4/I / DSM 18386 / JCM 14125)).